A 555-amino-acid polypeptide reads, in one-letter code: Urocanate hydratase (555 aa).

NAD(+) contacts are provided by residues 52–53 (GG), Gln130, 176–178 (GMG), Glu196, Arg201, 242–243 (NA), 263–267 (QTSAH), 273–274 (YL), and Tyr322. Cys410 is a catalytic residue. Residue Gly492 participates in NAD(+) binding.

Belongs to the urocanase family. The cofactor is NAD(+).

Its subcellular location is the cytoplasm. It catalyses the reaction 4-imidazolone-5-propanoate = trans-urocanate + H2O. Its pathway is amino-acid degradation; L-histidine degradation into L-glutamate; N-formimidoyl-L-glutamate from L-histidine: step 2/3. Its function is as follows. Catalyzes the conversion of urocanate to 4-imidazolone-5-propionate. The chain is Urocanate hydratase from Shewanella baltica (strain OS195).